An 89-amino-acid polypeptide reads, in one-letter code: Putative protein T-ENOL (89 aa).

Disordered regions lie at residues 1–31 (MAST…KASL) and 54–89 (RSHM…TDTR).

Specifically expressed in testis (at protein level).

The sequence is that of Putative protein T-ENOL from Rattus norvegicus (Rat).